The primary structure comprises 154 residues: Ribosome maturation factor RimP (154 aa).

The protein belongs to the RimP family.

The protein localises to the cytoplasm. In terms of biological role, required for maturation of 30S ribosomal subunits. The chain is Ribosome maturation factor RimP from Hydrogenobaculum sp. (strain Y04AAS1).